The chain runs to 335 residues: Anthranilate phosphoribosyltransferase (335 aa).

Residues G79, G82–D83, T87, N89–T92, K107–S115, and S119 each bind 5-phospho-alpha-D-ribose 1-diphosphate. G79 is a binding site for anthranilate. S91 is a Mg(2+) binding site. R165 serves as a coordination point for anthranilate. 2 residues coordinate Mg(2+): D223 and E224.

Belongs to the anthranilate phosphoribosyltransferase family. In terms of assembly, homodimer. Requires Mg(2+) as cofactor.

It carries out the reaction N-(5-phospho-beta-D-ribosyl)anthranilate + diphosphate = 5-phospho-alpha-D-ribose 1-diphosphate + anthranilate. It participates in amino-acid biosynthesis; L-tryptophan biosynthesis; L-tryptophan from chorismate: step 2/5. Functionally, catalyzes the transfer of the phosphoribosyl group of 5-phosphorylribose-1-pyrophosphate (PRPP) to anthranilate to yield N-(5'-phosphoribosyl)-anthranilate (PRA). In Helicobacter pylori (strain G27), this protein is Anthranilate phosphoribosyltransferase.